The sequence spans 133 residues: Large-conductance mechanosensitive channel (133 aa).

2 helical membrane passes run 10-30 (FAVK…AAFG) and 76-96 (GIFV…FLVV).

The protein belongs to the MscL family. As to quaternary structure, homopentamer.

The protein resides in the cell inner membrane. Its function is as follows. Channel that opens in response to stretch forces in the membrane lipid bilayer. May participate in the regulation of osmotic pressure changes within the cell. This chain is Large-conductance mechanosensitive channel, found in Chlorobium phaeobacteroides (strain BS1).